The sequence spans 149 residues: MTSFKLVKYIPRIKKKKSGLRKLARKVPTDRLLKFERVFKAQKRIHMSVFKAQRVLDEIRWRYYEETVMILNLMPYRASYPILKLVYSAAANAAHYRDFDKANLFITKAEVSRSTIMKKFRPRARGRSFPIKKSMCHITIALNIVKRSK.

This sequence belongs to the universal ribosomal protein uL22 family. Part of the 50S ribosomal subunit.

It localises to the plastid. It is found in the chloroplast. Its function is as follows. This protein binds specifically to 23S rRNA. In terms of biological role, the globular domain of the protein is located near the polypeptide exit tunnel on the outside of the subunit, while an extended beta-hairpin is found that lines the wall of the exit tunnel in the center of the 70S ribosome. In Brachypodium distachyon (Purple false brome), this protein is Large ribosomal subunit protein uL22c (rpl22).